Here is a 340-residue protein sequence, read N- to C-terminus: Sodium/bile acid cotransporter 7 (340 aa).

At 1 to 10 (MRLLERARKE) the chain is on the cytoplasmic side. A helical transmembrane segment spans residues 11 to 31 (WFMVGIVVAIGAAKLEPSVGV). The Extracellular segment spans residues 32–37 (NGGPLK). Residues 38–58 (PEITVSYIAVATIFFNSGLSL) form a helical membrane-spanning segment. Residues 59 to 71 (KTEELTSALVHLR) are Cytoplasmic-facing. A helical membrane pass occupies residues 72-92 (LHLFIQIFTLAFFPAAIWLFL). Over 93–116 (QLLSVTSINEWLLKGLQTVGCMPP) the chain is Extracellular. The helical transmembrane segment at 117 to 137 (PVSSAVILTKAVGGNEAAAIF) threads the bilayer. Position 138 (Asn-138) is a topological domain, cytoplasmic. A helical transmembrane segment spans residues 139–159 (SAFGSFLGIVVTPVLLLLFLG). Residues 160 to 163 (SSSS) lie on the Extracellular side of the membrane. The chain crosses the membrane as a helical span at residues 164–184 (VPFTSIFSQLFMTVVVPLVIG). At 185–201 (QIVRRYIKDWLERKKPP) the chain is on the cytoplasmic side. A helical transmembrane segment spans residues 202 to 222 (FGVVSSSVLLMIIYTTFCDTF). The Extracellular portion of the chain corresponds to 223-234 (SNPNIDLDKFSL). A helical membrane pass occupies residues 235-255 (ILILFIIVSVQLSFMLLTFIF). At 256–270 (STRNNSGFTPADTVA) the chain is on the cytoplasmic side. Residues 271 to 291 (IIFCSTHKSLTLGIPMLKIVF) traverse the membrane as a helical segment. The Extracellular portion of the chain corresponds to 292 to 298 (AGHEHLS). The chain crosses the membrane as a helical span at residues 299 to 319 (LISVPLLIYHPAQILLGSVLV). The Cytoplasmic segment spans residues 320-340 (PTIKSWMVSRQKGVKLTRPTV).

This sequence belongs to the bile acid:sodium symporter (BASS) (TC 2.A.28) family. In terms of tissue distribution, expressed in heart, brain, colon, lung, liver, adrenal gland, stomach and ovary. Also expressed weakly in small intestine. Expressed in skeletal tissues.

It is found in the cell membrane. Its subcellular location is the endoplasmic reticulum membrane. The protein resides in the golgi apparatus membrane. Its function is as follows. Involved in teeth and skeletal development. Has an essential role in the biosynthesis and trafficking of glycosaminoglycans and glycoproteins to produce a proper functioning extracellular matrix. Required for extracellular matrix mineralization. Also involved in the regulation of cellular calcium homeostasis. Does not show transport activity towards bile acids or steroid sulfates (including taurocholate, cholate, chenodeoxycholate, estrone-3-sulfate, dehydroepiandrosterone sulfate (DHEAS) and pregnenolone sulfate). The sequence is that of Sodium/bile acid cotransporter 7 (Slc10a7) from Mus musculus (Mouse).